The chain runs to 546 residues: Probable T-complex protein 1 subunit theta (546 aa).

The segment at M527–D546 is disordered.

The protein belongs to the TCP-1 chaperonin family. In terms of assembly, heterooligomeric complex of about 850 to 900 kDa that forms two stacked rings, 12 to 16 nm in diameter.

It localises to the cytoplasm. In terms of biological role, molecular chaperone; assists the folding of proteins upon ATP hydrolysis. Known to play a role, in vitro, in the folding of actin and tubulin. The sequence is that of Probable T-complex protein 1 subunit theta (cct8) from Schizosaccharomyces pombe (strain 972 / ATCC 24843) (Fission yeast).